A 546-amino-acid chain; its full sequence is Chaperonin GroEL (546 aa).

Residues 29 to 32, Lys-50, 86 to 90, Gly-414, and Asp-492 contribute to the ATP site; these read TMGP and DGTTT.

This sequence belongs to the chaperonin (HSP60) family. As to quaternary structure, forms a cylinder of 14 subunits composed of two heptameric rings stacked back-to-back. Interacts with the co-chaperonin GroES.

It localises to the cytoplasm. It carries out the reaction ATP + H2O + a folded polypeptide = ADP + phosphate + an unfolded polypeptide.. Functionally, together with its co-chaperonin GroES, plays an essential role in assisting protein folding. The GroEL-GroES system forms a nano-cage that allows encapsulation of the non-native substrate proteins and provides a physical environment optimized to promote and accelerate protein folding. This is Chaperonin GroEL from Helicobacter pylori (strain P12).